Consider the following 261-residue polypeptide: Putative [LysW]-aminoadipate/[LysW]-glutamate kinase (261 aa).

Substrate contacts are provided by residues 35 to 36 (GG), Arg62, and Asn162.

The protein belongs to the acetylglutamate kinase family. LysZ subfamily.

It is found in the cytoplasm. It carries out the reaction [amino-group carrier protein]-C-terminal-N-(1,4-dicarboxybutan-1-yl)-L-glutamine + ATP = [amino-group carrier protein]-C-terminal-N-(1-carboxy-5-phosphooxy-5-oxopentan-1-yl)-L-glutamine + ADP. The catalysed reaction is [amino-group carrier protein]-C-terminal-gamma-(L-glutamyl)-L-glutamate + ATP = [amino-group carrier protein]-C-terminal-gamma-(5-phospho-L-glutamyl)-L-glutamate + ADP. It functions in the pathway amino-acid biosynthesis; L-lysine biosynthesis via AAA pathway; L-lysine from L-alpha-aminoadipate (Thermus route): step 2/5. Its pathway is amino-acid biosynthesis; L-arginine biosynthesis. Its function is as follows. Involved in both the arginine and lysine biosynthetic pathways. Phosphorylates the LysW-bound precursors glutamate (for arginine biosynthesis), respectively alpha-aminoadipate (for lysine biosynthesis). The chain is Putative [LysW]-aminoadipate/[LysW]-glutamate kinase from Pyrobaculum calidifontis (strain DSM 21063 / JCM 11548 / VA1).